Reading from the N-terminus, the 233-residue chain is Probable GTP-binding protein EngB (233 aa).

Residues 23-209 form the EngB-type G domain; the sequence is AVPEVAFAGR…QRIVAGWLCL (187 aa). GTP-binding positions include 31–38, 58–62, 82–85, 149–152, and 188–190; these read GRSNAGKS, GRTQH, DLPG, TKAD, and FSS. 2 residues coordinate Mg(2+): Ser38 and Thr60.

It belongs to the TRAFAC class TrmE-Era-EngA-EngB-Septin-like GTPase superfamily. EngB GTPase family. The cofactor is Mg(2+).

In terms of biological role, necessary for normal cell division and for the maintenance of normal septation. This chain is Probable GTP-binding protein EngB, found in Ralstonia pickettii (strain 12J).